Here is a 240-residue protein sequence, read N- to C-terminus: Thiopurine S-methyltransferase (240 aa).

W24–F35 contacts S-adenosyl-L-methionine. Residue F35 coordinates substrate. K53 is subject to N6-acetyllysine. Residues L64, E85, S129–I130, and R147 each bind S-adenosyl-L-methionine.

The protein belongs to the class I-like SAM-binding methyltransferase superfamily. TPMT family. In terms of assembly, monomer.

It is found in the cytoplasm. It catalyses the reaction S-adenosyl-L-methionine + a thiopurine = S-adenosyl-L-homocysteine + a thiopurine S-methylether.. It carries out the reaction mercaptopurine + S-adenosyl-L-methionine = 6-methylthiopurine + S-adenosyl-L-homocysteine + H(+). In terms of biological role, catalyzes the S-methylation of thiopurine drugs such as 6-mercaptopurine (also called mercaptopurine, 6-MP or its brand name Purinethol) using S-adenosyl-L-methionine as the methyl donor. TPMT activity modulates the cytotoxic effects of thiopurine prodrugs. A natural substrate for this enzyme has yet to be identified. This is Thiopurine S-methyltransferase (Tpmt) from Rattus norvegicus (Rat).